The sequence spans 378 residues: Septin-5 (378 aa).

The Septin-type G domain maps to Lys50–Gln323. Positions Gly60–Ser67 are G1 motif. GTP-binding positions include Gly60–Ser67, Thr94, and Gly120. A G3 motif region spans residues Asp117–Gly120. Arg177 is modified (omega-N-methylarginine). A G4 motif region spans residues Ala198 to Asp201. A GTP-binding site is contributed by Lys199–Glu207. Ser234 is subject to Phosphoserine. Residues Gly257 and Arg272 each coordinate GTP. Ser336 is modified (phosphoserine). Thr345 is modified (phosphothreonine). Positions Asp347–Gln378 form a coiled coil.

It belongs to the TRAFAC class TrmE-Era-EngA-EngB-Septin-like GTPase superfamily. Septin GTPase family. Septins polymerize into heterooligomeric protein complexes that form filaments, and can associate with cellular membranes, actin filaments and microtubules. GTPase activity is required for filament formation. Interacts with SEPTIN2 and SEPTIN5. In platelets, associated with a complex containing STX4. Interacts with PRKN; this interaction leads to SEPTIN5 ubiquitination and degradation. Interacts with DYRK1A. Interacts with STX1A; in the cerebellar cortex. Post-translationally, phosphorylated by DYRK1A.

It is found in the cytoplasm. The protein localises to the cytoskeleton. Its function is as follows. Filament-forming cytoskeletal GTPase. May play a role in cytokinesis (Potential). May play a role in platelet secretion. The protein is Septin-5 of Macaca fascicularis (Crab-eating macaque).